We begin with the raw amino-acid sequence, 155 residues long: UPF0178 protein RHE_CH02229 (155 aa).

This sequence belongs to the UPF0178 family.

The chain is UPF0178 protein RHE_CH02229 from Rhizobium etli (strain ATCC 51251 / DSM 11541 / JCM 21823 / NBRC 15573 / CFN 42).